Consider the following 262-residue polypeptide: 4-hydroxy-2-oxo-heptane-1,7-dioate aldolase (262 aa).

Histidine 45 functions as the Proton acceptor in the catalytic mechanism. Glutamine 147 serves as a coordination point for substrate. A divalent metal cation is bound at residue glutamate 149. Substrate contacts are provided by alanine 174 and aspartate 175. Aspartate 175 serves as a coordination point for a divalent metal cation.

This sequence belongs to the HpcH/HpaI aldolase family. Homohexamer; trimer of dimers. Requires a divalent metal cation as cofactor.

The catalysed reaction is 4-hydroxy-2-oxoheptanedioate = succinate semialdehyde + pyruvate. It carries out the reaction D-glyceraldehyde + 3-hydroxypyruvate = (3R,4S,5R)-3,4,5,6-tetrahydroxy-2-oxohexanoate. It catalyses the reaction D-glyceraldehyde + 3-hydroxypyruvate = 2-dehydro-D-gluconate. The enzyme catalyses D-glyceraldehyde + 3-hydroxypyruvate = 2-dehydro-D-galactonate. The catalysed reaction is D-glyceraldehyde + pyruvate = 2-dehydro-3-deoxy-L-galactonate. It carries out the reaction 2-dehydro-3-deoxy-D-gluconate = D-glyceraldehyde + pyruvate. Its pathway is aromatic compound metabolism; 4-hydroxyphenylacetate degradation; pyruvate and succinate semialdehyde from 4-hydroxyphenylacetate: step 7/7. In terms of biological role, catalyzes the reversible retro-aldol cleavage of 4-hydroxy-2-ketoheptane-1,7-dioate (HKHD) to pyruvate and succinic semialdehyde. In vitro, can catalyze the aldolisation reaction between hydroxypyruvate (HPA) or pyruvate (PA) and D-glyceraldehyde (D-GA). The condensation of hydroxypyruvate and D-glyceraldehyde produces (3R,4S,5R)-3,4,5,6-tetrahydroxy-2-oxohexanoate as the major product, 2-dehydro-D-gluconate and 2-dehydro-D-galactonate. The condensation of pyruvate and D-glyceraldehyde produces 2-dehydro-3-deoxy-L-galactonate as the major product and 2-dehydro-3-deoxy-D-gluconate. The protein is 4-hydroxy-2-oxo-heptane-1,7-dioate aldolase of Escherichia coli (strain ATCC 8739 / DSM 1576 / NBRC 3972 / NCIMB 8545 / WDCM 00012 / Crooks).